The following is a 151-amino-acid chain: Natriuretic peptides A (151 aa).

Positions 1–25 (MSSFSTTTVSFLLLLAFQLLGQTRA) are cleaved as a signal peptide. A disordered region spans residues 62–105 (VLSEPNEEAGAALSPLPEVPPWTGEVSPAQRDGGALGRGPWDSS). A propeptide spanning residues 93–103 (DGGALGRGPWD) is cleaved from the precursor. Residue Ser-129 is modified to Phosphoserine. Cys-130 and Cys-146 are oxidised to a cystine. Residues 147–151 (NSFRY) form an important for degradation of atrial natriuretic peptide by IDE region.

Belongs to the natriuretic peptide family. Homodimer; disulfide-linked antiparallel dimer. Post-translationally, the precursor molecule is proteolytically cleaved by CORIN at Arg-123 to produce atrial natriuretic peptide. Undergoes further proteolytic cleavage by unknown proteases to give rise to long-acting natriuretic peptide, vessel dilator and kaliuretic peptide. Additional processing gives rise to the auriculin and atriopeptin peptides. In the kidneys, alternative processing by an unknown protease results in the peptide urodilatin. In terms of processing, cleavage by MME initiates degradation of the factor and thereby regulates its activity. Degraded by IDE (in vitro). During IDE degradation, the resulting products can temporarily stimulate NPR2 to produce cGMP, before the fragments are completely degraded and inactivated by IDE (in vitro). Degraded by IDE. Post-translationally, phosphorylation on Ser-129 decreases vasorelaxant activity. As to expression, detected in the kidney distal tubular cells (at protein level). Present in urine (at protein level). Detected in atrial and ventricular plasma samples, and in adipocytes (at protein level). Detected in urine in one study. However, was not detected in urine in another study. In the brain, predominantly expressed in the gray matter with very weak expression in the white matter (at protein level). Localizes to astrocyte-like structures throughout the white matter, and in the cerebral vessels detected in the leptomeningeal and parenchymal vessels, and endothelium and smooth muscle layers (at protein level). Relatively low levels of expression in the kidneys compared to urodilatin (at protein level).

Its subcellular location is the secreted. The protein localises to the perikaryon. It is found in the cell projection. Its function is as follows. Hormone that plays a key role in mediating cardio-renal homeostasis, and is involved in vascular remodeling and regulating energy metabolism. Acts by specifically binding and stimulating NPR1 to produce cGMP, which in turn activates effector proteins, such as PRKG1, that drive various biological responses. Regulates vasodilation, natriuresis, diuresis and aldosterone synthesis and is therefore essential for regulating blood pressure, controlling the extracellular fluid volume and maintaining the fluid-electrolyte balance. Also involved in inhibiting cardiac remodeling and cardiac hypertrophy by inducing cardiomyocyte apoptosis and attenuating the growth of cardiomyocytes and fibroblasts. Plays a role in female pregnancy by promoting trophoblast invasion and spiral artery remodeling in uterus, and thus prevents pregnancy-induced hypertension. In adipose tissue, acts in various cGMP- and PKG-dependent pathways to regulate lipid metabolism and energy homeostasis. This includes up-regulating lipid metabolism and mitochondrial oxygen utilization by activating the AMP-activated protein kinase (AMPK), and increasing energy expenditure by acting via MAPK11 to promote the UCP1-dependent thermogenesis of brown adipose tissue. Binds the clearance receptor NPR3 which removes the hormone from circulation. May have a role in cardio-renal homeostasis through regulation of natriuresis, diuresis, vasodilation, and inhibiting aldosterone synthesis. In vitro, promotes the production of cGMP and induces vasodilation. May promote natriuresis, at least in part, by enhancing prostaglandin E2 synthesis resulting in the inhibition of renal Na+-K+-ATPase. However reports on the involvement of this peptide in mammal blood volume and blood pressure homeostasis are conflicting; according to a report, in vivo it is not sufficient to activate cGMP and does not inhibit collecting duct transport nor effect diuresis and natriuresis. Appears to bind to specific receptors that are distinct from the receptors bound by atrial natriuretic peptide and vessel dilator. Possibly enhances protein excretion in urine by decreasing proximal tubular protein reabsorption. In terms of biological role, may have a role in cardio-renal homeostasis through regulation of natriuresis, diuresis, and vasodilation. In vitro, promotes the production of cGMP and induces vasodilation. May promote natriuresis, at least in part, by enhancing prostaglandin E2 synthesis resulting in the inhibition of renal Na+-K+-ATPase. However reports on the involvement of this peptide in mammal blood volume and blood pressure homeostasis are conflicting; according to a report it is not sufficient to activate cGMP and does not inhibit collecting duct transport nor effect diuresis and natriuresis. Appears to bind to specific receptors that are distinct from the receptors bound by the atrial natriuretic and long-acting natriuretic peptides. Possibly functions in protein excretion in urine by maintaining the integrity of the proximal tubules and enhancing protein excretion by decreasing proximal tubular protein reabsorption. Functionally, may have a role in cardio-renal homeostasis through regulation of diuresis and inhibiting aldosterone synthesis. In vitro, promotes the production of cGMP and induces vasodilation. May promote natriuresis, at least in part, by enhancing prostaglandin E2 synthesis resulting in the inhibition of renal Na+-K+-ATPase. May have a role in potassium excretion but not sodium excretion (natriuresis). Possibly enhances protein excretion in urine by decreasing proximal tubular protein reabsorption. Its function is as follows. Hormone produced in the kidneys that appears to be important for maintaining cardio-renal homeostasis. Mediates vasodilation, natriuresis and diuresis primarily in the renal system, in order to maintain the extracellular fluid volume and control the fluid-electrolyte balance. Specifically binds and stimulates cGMP production by renal transmembrane receptors, likely NPR1. Urodilatin not ANP, may be the natriuretic peptide responsible for the regulation of sodium and water homeostasis in the kidney. May have a role in cardio-renal homeostasis through regulation of natriuresis and vasodilation. In vivo promotes natriuresis and in vitro, vasodilates renal artery strips. In terms of biological role, may have a role in cardio-renal homeostasis through regulation of regulation of natriuresis and vasodilation. In vivo promotes natriuresis. In vitro, vasodilates intestinal smooth muscle but not smooth muscle strips. Functionally, may have a role in cardio-renal homeostasis through regulation of natriuresis and vasodilation. In vivo promotes natriuresis. In vitro, selectively vasodilates intestinal and vascular smooth muscle strips. Its function is as follows. May have a role in cardio-renal homeostasis through regulation of natriuresis and vasodilation. In vivo promotes natriuresis. In vitro, selectively vasodilates intestinal smooth muscle but not vascular smooth muscle strips. This Homo sapiens (Human) protein is Natriuretic peptides A (NPPA).